Reading from the N-terminus, the 278-residue chain is Purine nucleoside phosphorylase YlmD (278 aa).

3 residues coordinate Zn(2+): H87, C132, and H149.

It belongs to the purine nucleoside phosphorylase YfiH/LACC1 family. In terms of assembly, homodimer. Requires Cu(2+) as cofactor. Zn(2+) is required as a cofactor.

The catalysed reaction is adenosine + phosphate = alpha-D-ribose 1-phosphate + adenine. The enzyme catalyses S-methyl-5'-thioadenosine + phosphate = 5-(methylsulfanyl)-alpha-D-ribose 1-phosphate + adenine. It carries out the reaction inosine + phosphate = alpha-D-ribose 1-phosphate + hypoxanthine. It catalyses the reaction adenosine + H2O + H(+) = inosine + NH4(+). Functionally, purine nucleoside enzyme that catalyzes the phosphorolysis of adenosine and inosine nucleosides, yielding D-ribose 1-phosphate and the respective free bases, adenine and hypoxanthine. Also catalyzes the phosphorolysis of S-methyl-5'-thioadenosine into adenine and S-methyl-5-thio-alpha-D-ribose 1-phosphate. Also has adenosine deaminase activity. This chain is Purine nucleoside phosphorylase YlmD (ylmD), found in Bacillus subtilis (strain 168).